A 776-amino-acid polypeptide reads, in one-letter code: Transcription factor MYB3R-1 (776 aa).

The interval 1 to 41 (MKREMKAPTTPLESLQGDLKGKQGRTSGPARRSTKGQWTPE) is disordered. HTH myb-type domains follow at residues 30–81 (ARRS…QKVL), 82–137 (NPEL…NPGI), and 138–188 (NKNA…KKKL). DNA-binding regions (H-T-H motif) lie at residues 58 to 81 (WKKIAECFKDRTDVQCLHRWQKVL), 110 to 133 (WSTISQHLPGRIGKQCRERWHNHL), and 161 to 184 (WAELMKFLPGRSDNSIKNHWNSSV). 3 disordered regions span residues 217 to 253 (SSWMHSNGDEGSSRPGVDAEESECSQASTVFSQSTND), 364 to 384 (FQSSVRLSDQPFLSNSDTDPE), and 401 to 435 (DNMKDSSTSSGEQGRNMVDPQNGKGSLCSQAAETH). Polar residues-rich tracts occupy residues 240–253 (CSQASTVFSQSTND), 364–380 (FQSSVRLSDQPFLSNSD), and 423–432 (GKGSLCSQAA). Positions 648–655 (KKRHRDLL) match the Nuclear localization signal motif.

In terms of assembly, component of a DREAM-like complex which modulates a variety of developmentally regulated genes and of the mitotic genes in proliferating and differentiated cells. Expressed ubiquitously at low levels. Expressed in roots, cotyledons, flowers and leaves, especially in vascular tissues.

The protein resides in the nucleus. In terms of biological role, transcription factor that binds 5'-AACGG-3' motifs in gene promoters. Transcription activator involved in the regulation of cytokinesis, probably via the activation of several G2/M phase-specific genes transcription (e.g. KNOLLE). Transcription repressor that regulates organ growth. Binds to the promoters of G2/M-specific genes and to E2F target genes to prevent their expression in post-mitotic cells and to restrict the time window of their expression in proliferating cells. Required for the maintenance of diploidy. In Arabidopsis thaliana (Mouse-ear cress), this protein is Transcription factor MYB3R-1.